Consider the following 181-residue polypeptide: MSIEQLKDQIPDFAKDVRLNLSSMASDETLSPQAKYGLFVACAIATRNPMVMAAFEAVAAAQLSATALAAAKSAAAIMAMNNVYYRFVHLASNKEYATMPARLRMNVIANPGVDKADFELWSLAVSAINGCGTCIDAHEKVLQEAAVPAASIQTAVRFAAIIQSVAVAIEAAGVTVALAAE.

C131 acts as the Proton donor in catalysis. C131 and C134 form a disulfide bridge. C134 functions as the Cysteine sulfenic acid (-SOH) intermediate in the catalytic mechanism.

The protein belongs to the AhpD family.

The catalysed reaction is N(6)-[(R)-dihydrolipoyl]-L-lysyl-[lipoyl-carrier protein] + a hydroperoxide = N(6)-[(R)-lipoyl]-L-lysyl-[lipoyl-carrier protein] + an alcohol + H2O. In terms of biological role, antioxidant protein with alkyl hydroperoxidase activity. Required for the reduction of the AhpC active site cysteine residues and for the regeneration of the AhpC enzyme activity. The polypeptide is Alkyl hydroperoxide reductase AhpD (Bradyrhizobium sp. (strain ORS 278)).